The following is a 385-amino-acid chain: Putative non-inhibitory serpin-Z11 (385 aa).

The interval 324 to 348 is RCL; it reads GTTAVEAMYSPSSPGYSPGYQPPRP.

Belongs to the serpin family.

This chain is Putative non-inhibitory serpin-Z11, found in Oryza sativa subsp. japonica (Rice).